Reading from the N-terminus, the 174-residue chain is U-stichotoxin-Hau2a (174 aa).

The N-terminal stretch at 1–18 (MKPIFIVALLFSTCLVNA) is a signal peptide. Residues 19–33 (KPSINDADIKREPEP) constitute a propeptide that is removed on maturation. Hydroxyproline is present on Pro39. 2 disulfides stabilise this stretch: Cys40–Cys51 and Cys43–Cys58. Positions 61-67 (RKREPEP) are excised as a propeptide. At Pro73 the chain carries Hydroxyproline. 2 cysteine pairs are disulfide-bonded: Cys74–Cys85 and Cys77–Cys92. Positions 95–101 (RKREPEP) are excised as a propeptide. Pro107 carries the post-translational modification Hydroxyproline. Cystine bridges form between Cys108/Cys119 and Cys111/Cys126. Positions 129 to 135 (RKREPEP) are excised as a propeptide. A Hydroxyproline modification is found at Pro141. 2 cysteine pairs are disulfide-bonded: Cys142/Cys153 and Cys145/Cys160. A propeptide spanning residues 163–174 (RKREPENQDLWS) is cleaved from the precursor.

This sequence belongs to the sea anemone BBH family.

The protein localises to the secreted. Its subcellular location is the nematocyst. In terms of biological role, neurotoxin that paralyzes freshwater crabs at high concentration. This is U-stichotoxin-Hau2a from Heteractis aurora (Banded sea anemone).